Consider the following 105-residue polypeptide: Small ribosomal subunit protein uS10 (105 aa).

The protein belongs to the universal ribosomal protein uS10 family. As to quaternary structure, part of the 30S ribosomal subunit.

Its function is as follows. Involved in the binding of tRNA to the ribosomes. This is Small ribosomal subunit protein uS10 from Rickettsia rickettsii (strain Iowa).